Here is a 624-residue protein sequence, read N- to C-terminus: DNA (cytosine-5)-methyltransferase DRM1 (624 aa).

UBA domains lie at 57 to 100 (RISD…LFNY) and 108 to 149 (SSKS…LLTY). The disordered stretch occupies residues 160 to 189 (DMNININDDDDDNLYSLSSDDEEDELNNSS). Over residues 166 to 185 (NDDDDDNLYSLSSDDEEDEL) the composition is skewed to acidic residues. Residues 188–231 (SSNEDRILQALIKMGYLREDAAIAIERCGEDASMEEVVDFICAA) enclose the UBA 3 domain. The 332-residue stretch at 291–622 (MHRPVPIPDI…EAVRRKARHM (332 aa)) folds into the SAM-dependent MTase DRM-type domain.

Belongs to the class I-like SAM-binding methyltransferase superfamily. DRM-methyltransferase family.

The protein localises to the nucleus. It carries out the reaction a 2'-deoxycytidine in DNA + S-adenosyl-L-methionine = a 5-methyl-2'-deoxycytidine in DNA + S-adenosyl-L-homocysteine + H(+). In terms of biological role, involved in de novo DNA methylation. Controls asymmetric and CpNpG methylation. Required for FWA gene silencing but not for the maintenance of SUP gene silencing. Functionally redundant to CMT3 to maintain non-CpG methylation. Involved in RNA-directed DNA methylation. The protein is DNA (cytosine-5)-methyltransferase DRM1 (DRM1) of Arabidopsis thaliana (Mouse-ear cress).